Consider the following 131-residue polypeptide: Profilin-9 (131 aa).

The cysteines at positions 13 and 115 are disulfide-linked. An Involved in PIP2 interaction motif is present at residues 81 to 97 (AVIRGKKGSGGITVKKT). Thr111 is modified (phosphothreonine).

It belongs to the profilin family. Occurs in many kinds of cells as a complex with monomeric actin in a 1:1 ratio. In terms of processing, phosphorylated by MAP kinases.

Its subcellular location is the cytoplasm. The protein localises to the cytoskeleton. Binds to actin and affects the structure of the cytoskeleton. At high concentrations, profilin prevents the polymerization of actin, whereas it enhances it at low concentrations. In Zea mays (Maize), this protein is Profilin-9.